A 369-amino-acid chain; its full sequence is Phospho-N-acetylmuramoyl-pentapeptide-transferase (369 aa).

A run of 10 helical transmembrane segments spans residues 13 to 33 (ISGIGLASSLAAGLGIAALTL), 49 to 69 (LPLLLCTIASAIAGYFVVPLL), 95 to 115 (MGGIFFIPVAVVGACVLSNFA), 119 to 139 (LAVSALTLSYGLIGWIDDWQI), 154 to 174 (LALQIGFAAAFCLWLMFNQPA), 183 to 203 (WVSFALPLGFLFWPLAGFVLV), 215 to 235 (IDGLAGGTVAIALLALGAIVA), 237 to 257 (TSPALMVFCAALSGSCLGFLA), 281 to 301 (AVALLTNSLVALFILSGIFFV), and 346 to 366 (VVSSFYVIAAILAAICLAIAS).

This sequence belongs to the glycosyltransferase 4 family. MraY subfamily. Mg(2+) serves as cofactor.

The protein resides in the cell inner membrane. It carries out the reaction UDP-N-acetyl-alpha-D-muramoyl-L-alanyl-gamma-D-glutamyl-meso-2,6-diaminopimeloyl-D-alanyl-D-alanine + di-trans,octa-cis-undecaprenyl phosphate = di-trans,octa-cis-undecaprenyl diphospho-N-acetyl-alpha-D-muramoyl-L-alanyl-D-glutamyl-meso-2,6-diaminopimeloyl-D-alanyl-D-alanine + UMP. Its pathway is cell wall biogenesis; peptidoglycan biosynthesis. Its function is as follows. Catalyzes the initial step of the lipid cycle reactions in the biosynthesis of the cell wall peptidoglycan: transfers peptidoglycan precursor phospho-MurNAc-pentapeptide from UDP-MurNAc-pentapeptide onto the lipid carrier undecaprenyl phosphate, yielding undecaprenyl-pyrophosphoryl-MurNAc-pentapeptide, known as lipid I. The polypeptide is Phospho-N-acetylmuramoyl-pentapeptide-transferase (Nostoc sp. (strain PCC 7120 / SAG 25.82 / UTEX 2576)).